The following is a 127-amino-acid chain: Transthyretin (127 aa).

At Cys-10 the chain carries Sulfocysteine. Residue Lys-15 coordinates L-thyroxine. Glu-42 bears the 4-carboxyglutamate mark. Glu-54 provides a ligand contact to L-thyroxine. Asn-98 carries an N-linked (GlcNAc...) asparagine glycan. Position 117 (Ser-117) interacts with L-thyroxine.

Belongs to the transthyretin family. As to quaternary structure, homotetramer. Dimer of dimers. In the homotetramer, subunits assemble around a central channel that can accommodate two ligand molecules. Interacts with RBP4. Post-translationally, sulfonation of the reactive cysteine Cys-10 enhances the stability of the native conformation of TTR, avoiding misassembly of the protein leading to amyloid formation. As to expression, detected in serum (at protein level).

It is found in the secreted. Thyroid hormone-binding protein. Probably transports thyroxine from the bloodstream to the brain. This chain is Transthyretin (TTR), found in Oryctolagus cuniculus (Rabbit).